A 541-amino-acid polypeptide reads, in one-letter code: Chaperonin GroEL 1 (541 aa).

ATP-binding positions include 29–32 (TLGP), 86–90 (DGTTT), G413, 477–479 (NAA), and D493.

It belongs to the chaperonin (HSP60) family. Forms a cylinder of 14 subunits composed of two heptameric rings stacked back-to-back. Interacts with the co-chaperonin GroES.

The protein localises to the cytoplasm. The enzyme catalyses ATP + H2O + a folded polypeptide = ADP + phosphate + an unfolded polypeptide.. Functionally, together with its co-chaperonin GroES, plays an essential role in assisting protein folding. The GroEL-GroES system forms a nano-cage that allows encapsulation of the non-native substrate proteins and provides a physical environment optimized to promote and accelerate protein folding. In Nocardioides sp. (strain ATCC BAA-499 / JS614), this protein is Chaperonin GroEL 1.